The primary structure comprises 95 residues: FXYD domain-containing ion transport regulator 6 (95 aa).

The N-terminal stretch at 1–18 (MELVLVFLCSLLAPMVLA) is a signal peptide. At 19–35 (SAAEKEKEMDPFHYDYQ) the chain is on the extracellular side. Residues 36 to 57 (TLRIGGLVFAVVLFSVGILLIL) form a helical membrane-spanning segment. Residues 58–95 (SRRCKCSFNQKPRAPGDEEAQVENLITANATEPQKAEN) are Cytoplasmic-facing. The disordered stretch occupies residues 69–95 (PRAPGDEEAQVENLITANATEPQKAEN).

It belongs to the FXYD family. Regulatory subunit of the sodium/potassium-transporting ATPase which is composed of a catalytic alpha subunit, a non-catalytic beta subunit and an additional regulatory subunit. The regulatory subunit, a member of the FXYD protein family, modulates the enzymatic activity in a tissue- and isoform-specific way by changing affinities of the Na+/K+-ATPase toward Na(+), K(+) or ATP.

The protein localises to the cell membrane. In terms of biological role, associates with and regulates the activity of the sodium/potassium-transporting ATPase (NKA) which catalyzes the hydrolysis of ATP coupled with the exchange of Na(+) and K(+) ions across the plasma membrane. Reduces the apparent affinity for intracellular Na(+) with no change in the apparent affinity for extracellular K(+). In addition to modulating NKA kinetics, may also function as a regulator of NKA localization to the plasma membrane. This Homo sapiens (Human) protein is FXYD domain-containing ion transport regulator 6.